The sequence spans 479 residues: Adenylate kinase 8 (479 aa).

2 adenylate kinase regions span residues 58 to 258 and 269 to 471; these read PRVV…TYVQ and PKVL…SGII. 67–72 contacts ATP; it reads ASGKTT. The interval 87–113 is NMP 1; sequence TKENLLEREFSLLSLEAKKHYQVYKRV. AMP contacts are provided by residues 140–143, Gln-147, and Arg-203; that span reads GIPE. Residues 177-206 are LID 1; the sequence is GKRIDPVTGEIYHTTFDWPPELEIQNRLIQ. 278–283 contacts ATP; that stretch reads GCGKKL. The interval 298 to 327 is NMP 2; the sequence is SCGQLLKEAMAAESSLGDLIEPFFEKRMTV. AMP is bound by residues 325–327, 354–357, and Gln-361; these read MTV and GFPR. Residues 391–424 form an LID 2 region; it reads LRRTDPVTGERFHLMYKPPPTIEVQARLLQNPKD. Arg-392 is a binding site for ATP.

This sequence belongs to the adenylate kinase family. Interacts with CFAP45 and CFAP52; CFAP45 and AK8 dimerization may create a cavity at the interface of the dimer that can accommodate AMP.

The protein resides in the cytoplasm. Its subcellular location is the cytosol. It localises to the cytoskeleton. It is found in the cilium axoneme. The catalysed reaction is AMP + ATP = 2 ADP. The enzyme catalyses a 2'-deoxyribonucleoside 5'-diphosphate + ATP = a 2'-deoxyribonucleoside 5'-triphosphate + ADP. It catalyses the reaction a ribonucleoside 5'-diphosphate + ATP = a ribonucleoside 5'-triphosphate + ADP. In terms of biological role, nucleoside monophosphate (NMP) kinase that catalyzes the reversible transfer of the terminal phosphate group between nucleoside triphosphates and monophosphates. Has highest activity toward AMP, and weaker activity toward dAMP, CMP and dCMP. Also displays broad nucleoside diphosphate kinase activity. This chain is Adenylate kinase 8 (Ak8), found in Rattus norvegicus (Rat).